The chain runs to 699 residues: Polyribonucleotide nucleotidyltransferase (699 aa).

Aspartate 485 and aspartate 491 together coordinate Mg(2+). In terms of domain architecture, KH spans 552 to 611 (PRITTIKINPEKIRDVIGKGGAVIRALTEETGTTIELEDDGTVKIASSNGEATKEAIRRI). In terms of domain architecture, S1 motif spans 621–689 (GRIYNGKVIR…RQGRVRLSIK (69 aa)).

Belongs to the polyribonucleotide nucleotidyltransferase family. As to quaternary structure, component of the RNA degradosome, which is a multiprotein complex involved in RNA processing and mRNA degradation. It depends on Mg(2+) as a cofactor.

It is found in the cytoplasm. It catalyses the reaction RNA(n+1) + phosphate = RNA(n) + a ribonucleoside 5'-diphosphate. Functionally, involved in mRNA degradation. Catalyzes the phosphorolysis of single-stranded polyribonucleotides processively in the 3'- to 5'-direction. The protein is Polyribonucleotide nucleotidyltransferase of Shewanella sp. (strain MR-7).